We begin with the raw amino-acid sequence, 394 residues long: Phosphoglycerate kinase (394 aa).

Substrate contacts are provided by residues 21–23, Arg36, 59–62, Arg118, and Arg151; these read DFN and HLGR. ATP contacts are provided by residues Lys202, Gly293, Glu324, and 350 to 353; that span reads GGDS.

It belongs to the phosphoglycerate kinase family. In terms of assembly, monomer.

It is found in the cytoplasm. It carries out the reaction (2R)-3-phosphoglycerate + ATP = (2R)-3-phospho-glyceroyl phosphate + ADP. The protein operates within carbohydrate degradation; glycolysis; pyruvate from D-glyceraldehyde 3-phosphate: step 2/5. The sequence is that of Phosphoglycerate kinase from Exiguobacterium sp. (strain ATCC BAA-1283 / AT1b).